A 553-amino-acid chain; its full sequence is Phenylalanine--tRNA ligase beta subunit (553 aa).

The region spanning 273–349 (FNVRNIDIEV…RAFGYNNITP (77 aa)) is the B5 domain. Mg(2+)-binding residues include D327, D333, D336, and D337.

Belongs to the phenylalanyl-tRNA synthetase beta subunit family. Type 2 subfamily. Tetramer of two alpha and two beta subunits. It depends on Mg(2+) as a cofactor.

The protein localises to the cytoplasm. The catalysed reaction is tRNA(Phe) + L-phenylalanine + ATP = L-phenylalanyl-tRNA(Phe) + AMP + diphosphate + H(+). The sequence is that of Phenylalanine--tRNA ligase beta subunit from Methanocella arvoryzae (strain DSM 22066 / NBRC 105507 / MRE50).